Consider the following 224-residue polypeptide: Viral late gene transcription factor 3 (224 aa).

A zinc finger lies at 6 to 26 (CSGCRHNGIVSEQGYEYCIFC).

It belongs to the orthopoxvirus VLTF-3/OPG127 family. Interacts with the late transcription elongation factor VLTF-4/OPG110. Interacts with the late transcription factors VLTF-1/OPG093.

In terms of biological role, acts with RNA polymerase to initiate transcription from late gene promoters. In Vaccinia virus (strain Ankara) (VACV), this protein is Viral late gene transcription factor 3 (OPG127).